The chain runs to 359 residues: Pyruvate dehydrogenase E1 component subunit beta, mitochondrial (359 aa).

The transit peptide at 1 to 30 (MAAVAGLVRGPLRQASGLLKRRFHRSAPAA) directs the protein to the mitochondrion. At Tyr-67 the chain carries Phosphotyrosine. A thiamine diphosphate-binding site is contributed by Glu-89. Residues Ile-142, Ala-190, Ile-191, Asp-193, and Asn-195 each coordinate K(+). Lys-354 carries the N6-acetyllysine modification.

As to quaternary structure, heterotetramer of two PDHA1 and two PDHB subunits. The heterotetramer interacts with DLAT, and is part of the multimeric pyruvate dehydrogenase complex that contains multiple copies of pyruvate dehydrogenase (E1), dihydrolipoamide acetyltransferase (DLAT, E2) and lipoamide dehydrogenase (DLD, E3). These subunits are bound to an inner core composed of about 48 DLAT and 12 PDHX molecules. Interacts with DLAT. Requires thiamine diphosphate as cofactor.

The protein resides in the mitochondrion matrix. The enzyme catalyses N(6)-[(R)-lipoyl]-L-lysyl-[protein] + pyruvate + H(+) = N(6)-[(R)-S(8)-acetyldihydrolipoyl]-L-lysyl-[protein] + CO2. In terms of biological role, the pyruvate dehydrogenase complex catalyzes the overall conversion of pyruvate to acetyl-CoA and CO(2), and thereby links the glycolytic pathway to the tricarboxylic cycle. The protein is Pyruvate dehydrogenase E1 component subunit beta, mitochondrial (Pdhb) of Rattus norvegicus (Rat).